Reading from the N-terminus, the 73-residue chain is Pelophylaxin-1 (73 aa).

The N-terminal stretch at 1–22 (MFTMKKSLLLVFFLGTIALSLC) is a signal peptide. A propeptide spanning residues 23 to 41 (EEERGADDDNGGEITDEEI) is cleaved from the precursor. A disulfide bond links cysteine 67 and cysteine 73.

Expressed by the skin glands.

Its subcellular location is the secreted. In terms of biological role, antimicrobial peptide. This chain is Pelophylaxin-1, found in Pelophylax fukienensis (Fukien gold-striped pond frog).